We begin with the raw amino-acid sequence, 232 residues long: Large ribosomal subunit protein uL1 (232 aa).

Belongs to the universal ribosomal protein uL1 family. As to quaternary structure, part of the 50S ribosomal subunit.

Binds directly to 23S rRNA. The L1 stalk is quite mobile in the ribosome, and is involved in E site tRNA release. Functionally, protein L1 is also a translational repressor protein, it controls the translation of the L11 operon by binding to its mRNA. This Syntrophus aciditrophicus (strain SB) protein is Large ribosomal subunit protein uL1.